A 448-amino-acid chain; its full sequence is UDP-N-acetylmuramoylalanine--D-glutamate ligase (448 aa).

112–118 serves as a coordination point for ATP; sequence GSNAKST.

It belongs to the MurCDEF family.

The protein resides in the cytoplasm. The enzyme catalyses UDP-N-acetyl-alpha-D-muramoyl-L-alanine + D-glutamate + ATP = UDP-N-acetyl-alpha-D-muramoyl-L-alanyl-D-glutamate + ADP + phosphate + H(+). Its pathway is cell wall biogenesis; peptidoglycan biosynthesis. In terms of biological role, cell wall formation. Catalyzes the addition of glutamate to the nucleotide precursor UDP-N-acetylmuramoyl-L-alanine (UMA). The chain is UDP-N-acetylmuramoylalanine--D-glutamate ligase from Acinetobacter baumannii (strain ATCC 17978 / DSM 105126 / CIP 53.77 / LMG 1025 / NCDC KC755 / 5377).